The sequence spans 530 residues: Ubiquitin carboxyl-terminal hydrolase 17 (530 aa).

A USP domain is found at 80 to 375 (AGLQNMGNTC…QAYVLFYIQK (296 aa)). The active-site Nucleophile is Cys89. His334 acts as the Proton acceptor in catalysis. Basic and acidic residues-rich tracts occupy residues 382-392 (SESVSRGREPR) and 398-413 (DTDRRATQGELKRDHP). Disordered regions lie at residues 382-416 (SESVSRGREPRALGAEDTDRRATQGELKRDHPCLQ) and 490-530 (SSTT…LVCQ). The interval 399–530 (TDRRATQGEL…HSKRALLVCQ (132 aa)) is mediates interaction with SUDS3. Over residues 498 to 510 (ESVNTGTLASLQG) the composition is skewed to polar residues. The span at 511–524 (RTRRSKGKNKHSKR) shows a compositional bias: basic residues.

It belongs to the peptidase C19 family. USP17 subfamily. Interacts with SUDS3; the interaction is direct. In terms of tissue distribution, broadly expressed.

The protein resides in the nucleus. It localises to the endoplasmic reticulum. It catalyses the reaction Thiol-dependent hydrolysis of ester, thioester, amide, peptide and isopeptide bonds formed by the C-terminal Gly of ubiquitin (a 76-residue protein attached to proteins as an intracellular targeting signal).. In terms of biological role, deubiquitinating enzyme that removes conjugated ubiquitin from specific proteins to regulate different cellular processes. Regulates cell proliferation by deubiquitinating and inhibiting RCE1 thereby controlling the small GTPases NRAS and HRAS localization and activation. In parallel, mediates deubiquitination of CDC25A, preventing CDC25A degradation by the proteasome during the G1/S and G2/M phases promoting cell-cycle progression. Also regulates cell proliferation and apoptosis through deubiquitination of SUDS3 a regulator of histone deacetylation. Through activation of the Rho family GTPases RAC1A, CDC42 and RHOA, regulates cell migration. Through the cleavage of 'Lys-48'- and 'Lys-63'-linked polyubiquitin chains of the cytoplasmic innate immune receptors RIGI and IFIH1 stimulates the cellular response to viral infection. The protein is Ubiquitin carboxyl-terminal hydrolase 17 (USP17L2) of Homo sapiens (Human).